The following is a 267-amino-acid chain: Glutamate 5-kinase (267 aa).

Lys-14 provides a ligand contact to ATP. 3 residues coordinate substrate: Ser-54, Asp-141, and Asn-157. ATP contacts are provided by residues 177-178 (SD) and 219-225 (TGGMMSK).

This sequence belongs to the glutamate 5-kinase family.

It is found in the cytoplasm. The catalysed reaction is L-glutamate + ATP = L-glutamyl 5-phosphate + ADP. It participates in amino-acid biosynthesis; L-proline biosynthesis; L-glutamate 5-semialdehyde from L-glutamate: step 1/2. Its function is as follows. Catalyzes the transfer of a phosphate group to glutamate to form L-glutamate 5-phosphate. The sequence is that of Glutamate 5-kinase from Streptococcus thermophilus.